Here is a 2285-residue protein sequence, read N- to C-terminus: MKGHQFKSWIFELREILREIKNSHYFLDSWTQFNSVGSFIHIFFHQERFIKLLDSRIWSILFSRNSQGSTSNRYFTIKGVVLFVVVVLIYRINNRKMVERKNLYLTGLLPIPMNSIGPRNDTLEESFGSSNINRLIVSLLYLPKGKKISESRFLDPKESTWVLPITKKCIMSESNWGSRWWRNWIGKKRDSSCKISNETVAGIEISFKEKDIKYLEFLFVYYMDDPIRKDHDWELFDRLSPRKGRNIINLNSGQLFEILVKDWICYLMFAFREKIPIEVEGFFKQQGAGSTIQSNDIEHVSHLFSRKKWAISLQNCAQFHMWQFRQDLFVSWGNNPHESDFLRNISRENWIWLDNVWLVNKDRFFSKARNISSNIQYDSTRSSFVQGRDSSQLKGSSDQSRDHFDSISNEDSEYHTLINQREIQQLKERSILWDPSFLQTERTEIESDRFPKCLSGYSSMSRLFTEGAKEMNNHLLPEEIEEFLGNPTRSIRSFFSDRWSELHLGSNPTERSTRDQKLLKKEQDVSFVPSRRSENKEIVNIFKTITYLQNTVSIHPISSDPGCDMVLKDELDMDSSNKISFLNKNPFFDLFHLFHDRNGGGYTLHHDFESEERFQEMADLFTLSITEPDLVYHKGFAFFIDSYGLDQKQFLNEVFNSRDESKKKSLLVLPPIFYEENESFYRRIRKKWVRISCGNDLEDPKQKRVVFASNNIMEAVNQYGLIRNLIQIQYSTYGYIRNVLNQFFLMNRSDRNFEYGIQKDQIGNDTLNHRTLMKYTINQHLSNLKQSQKKWFDPLIFLSRTERSMNWDPNSYRYKWSNGSNNFQEHLEHFISEQKSRFLFQVVFDRLRINQYSIDWSEVIDKKDLSKSLPFFLSKLLLFLSKFLLFLSNSLPFFFVSFGNIPIHRSEIHIYELKGPNDQLCNQLLEPIGLQIVHLKKWKPFLLDDHDTSQKSKFLINGGTISPFLFNKIPKWMIDSFHTRNNRRKSFDNTDSSFSMISHDQDNWLNPVKPFHRSSLISSFYKANRLRFLNNLHHFCFYCNKRFPFYVEKARIKNYDFTYGQFLNILFIRNKIFSLCGGKKKHAFLERDTISPIESQVSNIFIPNDFPQSGDESLYKSFHFPIRPDPFVRRAIYSIADVSGTPLTEGQIFNFERTYCQPLSDINLSDSEGKNLHQYLNFNSNMGLIHTPCSEKYLPSEKRKKRSLCLKKCVEKGQMYRTFQRDSAFSTLSKWNLFQTYMPWFLTSTGYKYLNLIFLDTFSDHLLPILSSSQKIVSIFHDIMHGSDISWRILQKNLWKTQWNLISEISSKCLHNLLLSEEMIHRNNEPPLISTRLRSPNVREFLYSILFLLLVAGYLVRTHLLFVSRAYSELQTEFEKVKSLMIPSYMIELRKLLDRYPTSELNSFWLKNLFLVALEQLGDLLEEIRGSASGGNMLWGGGPAYGVKSIRSKKKFFNINLIDLISIIPNPINRITFSRNTRHLSHTSKEIYSLIRKRKNVNGDWIDDKIESLVANSDSIDDKEREFLVQFSTLTTEKRIDQILLSLTHSDHLSKNDSGYQMIEEPGAIYLRYLVDIHKKYLMNYEFNTPCLAERRIFLAHYQTITYSQTSCGANSFHFPSHGKPFSLRLALSPSRGILVIGSIGTGRSYLVKYLATNSYVPFITVFLNKFLDNKPKGFLIDDRDDIDDSDDIDVSDDIDRDLDTELELLTRMNVLTMDMMPEIDRFYITLQFELAKAMSPCIIWIPNIHDLDVNESNYLSLGLLVNYLSRDCERCSTRNILVIASTHIPQKVDPALIAPNKLNTCIKIRRLLIPQQRKHVFTLSYSRGFHLEKKMFHTKRFGSVTMGSNVRDLVALTNEALSISITQKKSIIDTNIIRSALHRQTWDLRSQVRSVQDHGILFYQIGRAVAQNVFLSNCPIDPISIYMKKKSCNEGDSYLYKWYFELGTSMKKLTILLYLLSCSAGSIAQDLWSLPGPDEKNGITYYGLVENDSDLVHGLLEVEGALVGSSRTEKDCSQFDNDRVTLLLRPEPRSPLDMMQNGSCSILDQRFLYEKYESEFEEGEVEGILDPQQIEEDLFNHIVWAPRIWSPWGFLFDCIERPNSLGFPYWARSFRGKRIIYDEEDELQENDSEFLQSGTMQYQIRDRSSKEQGVFRISQFIWDPADPLFFLFKDQPLVSVFSHREFFADEEMSKGLLTSQTDPPTSIYKRWFIKNTQEKHFELLIHRQRWLRTKSSLSNGFFRSNTLSESYQYLSNLFLSNGRLLDQMTKALLRKRWLFPDEMKIGFM.

1638–1645 (GSIGTGRS) lines the ATP pocket.

Belongs to the Ycf2 family.

The protein resides in the plastid. It is found in the chloroplast stroma. In terms of biological role, probable ATPase of unknown function. Its presence in a non-photosynthetic plant (Epifagus virginiana) and experiments in tobacco indicate that it has an essential function which is probably not related to photosynthesis. The protein is Protein Ycf2 of Populus trichocarpa (Western balsam poplar).